Reading from the N-terminus, the 476-residue chain is Ataxin-10 (476 aa).

Position 10 is an omega-N-methylarginine (Arg10). Ser13 and Ser78 each carry phosphoserine. Thr83 bears the Phosphothreonine mark. The residue at position 431 (Ser431) is a Phosphoserine.

This sequence belongs to the ataxin-10 family. In terms of assembly, homooligomer. Interacts with GNB2. Interacts with IQCB1. Interacts with OGT. Post-translationally, polyubiquitinated. Phosphorylation at Ser-13 by AURKB promotes the association of ATXN10 with PLK1. Phosphorylation at Ser-78 and Thr-83 by PLK1 may play a role in the regulation of cytokinesis and may stimulate the proteasome-mediated degradation of ATXN10.

It is found in the cytoplasm. Its subcellular location is the perinuclear region. It localises to the midbody. The protein localises to the cytoskeleton. The protein resides in the cilium basal body. It is found in the microtubule organizing center. Its subcellular location is the centrosome. It localises to the centriole. May play a role in the regulation of cytokinesis. May play a role in signaling by stimulating protein glycosylation. Induces neuritogenesis by activating the Ras-MAP kinase pathway and is necessary for the survival of cerebellar neurons. Does not appear to play a major role in ciliogenesis. The polypeptide is Ataxin-10 (ATXN10) (Pongo abelii (Sumatran orangutan)).